The primary structure comprises 225 residues: Protein-L-isoaspartate O-methyltransferase (225 aa).

Serine 75 is a catalytic residue.

This sequence belongs to the methyltransferase superfamily. L-isoaspartyl/D-aspartyl protein methyltransferase family.

The protein localises to the cytoplasm. It catalyses the reaction [protein]-L-isoaspartate + S-adenosyl-L-methionine = [protein]-L-isoaspartate alpha-methyl ester + S-adenosyl-L-homocysteine. Its function is as follows. Catalyzes the methyl esterification of L-isoaspartyl residues in peptides and proteins that result from spontaneous decomposition of normal L-aspartyl and L-asparaginyl residues. It plays a role in the repair and/or degradation of damaged proteins. The protein is Protein-L-isoaspartate O-methyltransferase of Xanthomonas euvesicatoria pv. vesicatoria (strain 85-10) (Xanthomonas campestris pv. vesicatoria).